Consider the following 246-residue polypeptide: Probable transcriptional regulatory protein CKO_01097 (246 aa).

Positions 1 to 20 (MAGHSKWANTRHRKAAQDAK) are disordered.

It belongs to the TACO1 family.

It localises to the cytoplasm. The polypeptide is Probable transcriptional regulatory protein CKO_01097 (Citrobacter koseri (strain ATCC BAA-895 / CDC 4225-83 / SGSC4696)).